Reading from the N-terminus, the 158-residue chain is Transcription elongation factor GreA (158 aa).

It belongs to the GreA/GreB family.

Necessary for efficient RNA polymerase transcription elongation past template-encoded arresting sites. The arresting sites in DNA have the property of trapping a certain fraction of elongating RNA polymerases that pass through, resulting in locked ternary complexes. Cleavage of the nascent transcript by cleavage factors such as GreA or GreB allows the resumption of elongation from the new 3'terminus. GreA releases sequences of 2 to 3 nucleotides. The polypeptide is Transcription elongation factor GreA (Agrobacterium fabrum (strain C58 / ATCC 33970) (Agrobacterium tumefaciens (strain C58))).